The sequence spans 275 residues: NH(3)-dependent NAD(+) synthetase (275 aa).

50 to 57 serves as a coordination point for ATP; that stretch reads GISGGVDS. Position 56 (Asp-56) interacts with Mg(2+). A deamido-NAD(+)-binding site is contributed by Arg-147. Residue Thr-167 participates in ATP binding. Residue Glu-172 coordinates Mg(2+). Deamido-NAD(+) contacts are provided by Lys-180 and Asp-187. Lys-196 and Thr-218 together coordinate ATP. 267 to 268 is a deamido-NAD(+) binding site; that stretch reads HK.

The protein belongs to the NAD synthetase family. In terms of assembly, homodimer.

It catalyses the reaction deamido-NAD(+) + NH4(+) + ATP = AMP + diphosphate + NAD(+) + H(+). It participates in cofactor biosynthesis; NAD(+) biosynthesis; NAD(+) from deamido-NAD(+) (ammonia route): step 1/1. In terms of biological role, catalyzes the ATP-dependent amidation of deamido-NAD to form NAD. Uses ammonia as a nitrogen source. This is NH(3)-dependent NAD(+) synthetase from Pseudomonas syringae pv. tomato (strain ATCC BAA-871 / DC3000).